A 488-amino-acid polypeptide reads, in one-letter code: Inosine-5'-monophosphate dehydrogenase (488 aa).

2 CBS domains span residues 95-153 and 157-216; these read VISN…SIKI and MTQE…AKDE. NAD(+)-binding positions include Asp-250 and 300-302; that span reads GIG. K(+)-binding residues include Gly-302 and Gly-304. Position 305 (Ser-305) interacts with IMP. A K(+)-binding site is contributed by Cys-307. Cys-307 (thioimidate intermediate) is an active-site residue. IMP contacts are provided by residues 340-342, 363-364, and 387-391; these read DGG, GS, and YRGMG. The active-site Proton acceptor is Arg-403. Glu-417 lines the IMP pocket. A disordered region spans residues 468-488; the sequence is GLAESHPHNIQITKESPNYSF. The K(+) site is built by Glu-471, Ser-472, and His-473. Residues 475–488 are compositionally biased toward polar residues; it reads HNIQITKESPNYSF.

Belongs to the IMPDH/GMPR family. In terms of assembly, homotetramer. Requires K(+) as cofactor.

The enzyme catalyses IMP + NAD(+) + H2O = XMP + NADH + H(+). Its pathway is purine metabolism; XMP biosynthesis via de novo pathway; XMP from IMP: step 1/1. Its activity is regulated as follows. Mycophenolic acid (MPA) is a non-competitive inhibitor that prevents formation of the closed enzyme conformation by binding to the same site as the amobile flap. In contrast, mizoribine monophosphate (MZP) is a competitive inhibitor that induces the closed conformation. MPA is a potent inhibitor of mammalian IMPDHs but a poor inhibitor of the bacterial enzymes. MZP is a more potent inhibitor of bacterial IMPDH. Functionally, catalyzes the conversion of inosine 5'-phosphate (IMP) to xanthosine 5'-phosphate (XMP), the first committed and rate-limiting step in the de novo synthesis of guanine nucleotides, and therefore plays an important role in the regulation of cell growth. The polypeptide is Inosine-5'-monophosphate dehydrogenase (Staphylococcus aureus (strain Mu50 / ATCC 700699)).